Consider the following 343-residue polypeptide: Glucokinase (343 aa).

18-23 (GDIGGT) contributes to the ATP binding site.

This sequence belongs to the bacterial glucokinase family.

The protein resides in the cytoplasm. The catalysed reaction is D-glucose + ATP = D-glucose 6-phosphate + ADP + H(+). This is Glucokinase from Brucella abortus (strain 2308).